The chain runs to 267 residues: Fibroin light chain (267 aa).

An N-terminal signal peptide occupies residues Met-1 to Ala-16. The residue at position 19 (Ser-19) is an N-acetylserine; in short form. An intrachain disulfide couples Cys-103 to Cys-162.

In terms of assembly, silk fibroin elementary unit consists in a disulfide-linked heavy and light chain and a p25 glycoprotein in molar ratios of 6:6:1. This results in a complex of approximately 2.3 MDa. Partially N-terminally processed to yield a short form which lacks the first two residues of the long form. Post-translationally, the interchain disulfide bridge is essential for the intracellular transport and secretion of fibroin. Produced exclusively in the posterior (PSG) section of silk glands, which are essentially modified salivary glands.

The protein localises to the secreted. Its function is as follows. It is likely that the major role of L-chain is to prevent the retention of H-chain in ER by forming the disulfide linkage. This chain is Fibroin light chain (FIBL), found in Galleria mellonella (Greater wax moth).